A 360-amino-acid chain; its full sequence is Phosphoserine aminotransferase (360 aa).

Arg-41 is a binding site for L-glutamate. 4 residues coordinate pyridoxal 5'-phosphate: Trp-101, Thr-152, Asp-172, and Gln-195. Lys-196 carries the N6-(pyridoxal phosphate)lysine modification. 237–238 lines the pyridoxal 5'-phosphate pocket; that stretch reads NT.

It belongs to the class-V pyridoxal-phosphate-dependent aminotransferase family. SerC subfamily. As to quaternary structure, homodimer. Pyridoxal 5'-phosphate is required as a cofactor.

It localises to the cytoplasm. The catalysed reaction is O-phospho-L-serine + 2-oxoglutarate = 3-phosphooxypyruvate + L-glutamate. The enzyme catalyses 4-(phosphooxy)-L-threonine + 2-oxoglutarate = (R)-3-hydroxy-2-oxo-4-phosphooxybutanoate + L-glutamate. Its pathway is amino-acid biosynthesis; L-serine biosynthesis; L-serine from 3-phospho-D-glycerate: step 2/3. It participates in cofactor biosynthesis; pyridoxine 5'-phosphate biosynthesis; pyridoxine 5'-phosphate from D-erythrose 4-phosphate: step 3/5. Its function is as follows. Catalyzes the reversible conversion of 3-phosphohydroxypyruvate to phosphoserine and of 3-hydroxy-2-oxo-4-phosphonooxybutanoate to phosphohydroxythreonine. In Burkholderia lata (strain ATCC 17760 / DSM 23089 / LMG 22485 / NCIMB 9086 / R18194 / 383), this protein is Phosphoserine aminotransferase.